We begin with the raw amino-acid sequence, 517 residues long: Ribonuclease Y (517 aa).

A helical transmembrane segment spans residues 3-23 (AILYVIVAVIALILGGAAGVA). Residues 207-292 (TVTVVSLPND…EMVEKAQKEV (86 aa)) form the KH domain. One can recognise an HD domain in the interval 333-426 (VLKHSIEVAH…VAAADAISAA (94 aa)).

It belongs to the RNase Y family.

It localises to the cell membrane. Its function is as follows. Endoribonuclease that initiates mRNA decay. The sequence is that of Ribonuclease Y from Symbiobacterium thermophilum (strain DSM 24528 / JCM 14929 / IAM 14863 / T).